The following is a 259-amino-acid chain: GEM-like protein 1 (259 aa).

A compositionally biased stretch (basic and acidic residues) spans 1 to 11; the sequence is MSGQENHDHGR. Positions 1–79 are disordered; it reads MSGQENHDHG…PSPAPRNTMD (79 aa). A compositionally biased stretch (low complexity) spans 13–30; sequence SSTPAAASEPSKAAAHSS. Residues 138–215 form the GRAM domain; it reads KVFKQTFDCL…NQLKAVNPST (78 aa).

Belongs to the GEM family. Interacts with AFH1.

This is GEM-like protein 1 (FIP1) from Arabidopsis thaliana (Mouse-ear cress).